Consider the following 204-residue polypeptide: Ribosome maturation factor RimP (204 aa).

Belongs to the RimP family.

The protein resides in the cytoplasm. In terms of biological role, required for maturation of 30S ribosomal subunits. This chain is Ribosome maturation factor RimP, found in Allorhizobium ampelinum (strain ATCC BAA-846 / DSM 112012 / S4) (Agrobacterium vitis (strain S4)).